Here is a 103-residue protein sequence, read N- to C-terminus: Small ribosomal subunit protein uS10 (103 aa).

Belongs to the universal ribosomal protein uS10 family. As to quaternary structure, part of the 30S ribosomal subunit.

Functionally, involved in the binding of tRNA to the ribosomes. This Stenotrophomonas maltophilia (strain R551-3) protein is Small ribosomal subunit protein uS10.